We begin with the raw amino-acid sequence, 324 residues long: Homeobox protein Nkx-2.5 (324 aa).

The segment at residues 138–197 is a DNA-binding region (homeobox); the sequence is RRKPRVLFSQAQVYELERRFKQQRYLSAPERDQLASVLKLTSTQVKIWFQNRRYKCKRQR.

Belongs to the NK-2 homeobox family. In terms of assembly, homodimer (via the homeobox); binds DNA as homodimer. Interacts (via the homeobox) with TBX5 (via the T-box); this complex binds DNA. Interacts with HIPK1 and HIPK2, but not HIPK3. Interacts with the C-terminal zinc finger of GATA4 through its homeobox domain. Also interacts with JARID2 which represses its ability to activate transcription of ANF. Interacts with FBLIM1. Interacts with TBX18. Interacts with histone methyltransferase NSD2 (via HMG box). Interacts with NEDD9. Interacts with TBX1. In terms of tissue distribution, expressed only in the heart.

Its subcellular location is the nucleus. Its function is as follows. Transcription factor required for the development of the heart and the spleen. During heart development, acts as a transcriptional activator of NPPA/ANF in cooperation with GATA4. May cooperate with TBX2 to negatively modulate expression of NPPA/ANF in the atrioventricular canal. Binds to the core DNA motif of NPPA promoter. Together with PBX1, required for spleen development through a mechanism that involves CDKN2B repression. Positively regulates transcription of genes such as COL3A1 and MMP2, resulting in increased pulmonary endothelial fibrosis in response to hypoxia. This Homo sapiens (Human) protein is Homeobox protein Nkx-2.5 (NKX2-5).